The sequence spans 168 residues: Diphosphoinositol polyphosphate phosphohydrolase 1 (168 aa).

Met1 carries the post-translational modification N-acetylmethionine. Residues Arg10, 18–20 (KKR), and 39–41 (SSR) each bind substrate. Positions 17-144 (YKKRAACLCF…VQASYFETLR (128 aa)) constitute a Nudix hydrolase domain. 2 residues coordinate Mg(2+): Gly50 and Glu66. The short motif at 51 to 72 (GGMEPEEEPSVAAVREVCEEAG) is the Nudix box element. Glu69 acts as the Proton acceptor in catalysis. Position 70 (Glu70) interacts with Mg(2+). Residues 89-91 (RKH), Arg115, and Lys133 each bind substrate.

The protein belongs to the Nudix hydrolase family. DIPP subfamily. Monomer. It depends on Mg(2+) as a cofactor. Mn(2+) is required as a cofactor. The cofactor is Zn(2+). As to expression, present in heart, lung, liver and spleen (at protein level). Widely expressed.

It is found in the cytoplasm. The protein localises to the nucleus. The enzyme catalyses diphospho-myo-inositol polyphosphate + H2O = myo-inositol polyphosphate + phosphate.. It carries out the reaction 5-diphospho-1D-myo-inositol 1,2,3,4,6-pentakisphosphate + H2O = 1D-myo-inositol hexakisphosphate + phosphate + H(+). The catalysed reaction is 3,5-bis(diphospho)-1D-myo-inositol 1,2,4,6-tetrakisphosphate + H2O = 3-diphospho-1D-myo-inositol 1,2,4,5,6-pentakisphosphate + phosphate + 2 H(+). It catalyses the reaction [phosphate](n+1) + n H2O = (n+1) phosphate + n H(+). The enzyme catalyses P(1),P(5)-bis(5'-adenosyl) pentaphosphate + H2O = ADP + ATP + 2 H(+). It carries out the reaction P(1),P(6)-bis(5'-adenosyl) hexaphosphate + H2O = 2 ATP + 2 H(+). The catalysed reaction is P(1),P(4)-bis(5'-adenosyl) tetraphosphate + H2O = AMP + ATP + 2 H(+). It catalyses the reaction a 5'-end (N(7)-methyl 5'-triphosphoguanosine)-ribonucleoside in mRNA + H2O = N(7)-methyl-GMP + a 5'-end diphospho-ribonucleoside in mRNA + 2 H(+). The enzyme catalyses a 5'-end (N(7)-methyl 5'-triphosphoguanosine)-ribonucleoside in mRNA + H2O = N(7)-methyl-GDP + a 5'-end phospho-ribonucleoside in mRNA + 2 H(+). Cleaves a beta-phosphate from the diphosphate groups in PP-InsP5 (diphosphoinositol pentakisphosphate) and [PP]2-InsP4 (bisdiphosphoinositol tetrakisphosphate), suggesting that it may play a role in signal transduction. InsP6 (inositol hexakisphosphate) is not a substrate. Also able to catalyze the hydrolysis of dinucleoside oligophosphates, with diadenosine 5',5'''-P1,P6-hexaphosphate (Ap6A) and diadenosine 5',5'''- P1,P5-pentaphosphate (Ap5A) being the preferred substrates. The major reaction products are ADP and p4a from Ap6A and ADP and ATP from Ap5A. Also able to hydrolyze 5- phosphoribose 1-diphosphate. Acts as a negative regulator of the ERK1/2 pathway. Acts as a decapping enzyme that can hydrolyze both monomethylated and unmethylated capped RNAs. Hydrolyzes monomethylated capped RNA after both the alpha- and beta-phosphates generating m7GMP + ppRNA and m7GDP + pRNA. Modulates the stability of a subset of mRNAs implicated in cell motility. Divalent cations zinc, magnesium and manganese determine its substrate specificity. Exhibits diphosphoinositol polyphosphate phosphohydrolase in the presence of magnesium ions, diadenosine hexaphosphate hydrolase activity in the presence of manganese ions and endopolyphosphatase activity in the presence of zinc ions. Plays an important role in limiting DNA damage and maintaining cell survival upon oxidative stress via its endopolyphosphatase activity. The protein is Diphosphoinositol polyphosphate phosphohydrolase 1 of Mus musculus (Mouse).